Here is a 433-residue protein sequence, read N- to C-terminus: Hps1-dma1 cluster O-methyltransferase (433 aa).

Residues 36-55 (NGHPERSLNSTDSVRLSDAP) form a disordered region. Position 285 (Asp285) interacts with S-adenosyl-L-methionine. The active-site Proton acceptor is His331.

Belongs to the class I-like SAM-binding methyltransferase superfamily. Cation-independent O-methyltransferase family. COMT subfamily.

The protein operates within secondary metabolite biosynthesis. Its function is as follows. O-methyltransferase; part of the hps1-dma1 gene cluster that probably mediates the biosynthesis a derivative of cyclopiazonic acid (CPA). The hybrid polyketide synthase-nonribosomal peptide synthetase (PKS-NRPS) nps1 might incorporates acetyl-CoA, malonyl-CoA, and tryptophan (Trp) and utilizes a C-terminal redox-incompetent reductase domain to make and release the tryptophan tetramic acid, cyclo-acetoacetyl-L-tryptophan (c-AATrp), as the first intermediate in the pathway. In addition, the cluster also includes the tryptophan dimethylallyltransferase dma1, the FAD-dependent oxidoreductase toxD, the cytochrome P450 monooxygenase cyp3.1 and the methyltransferase DOTSEDRAFT_139328; the latter 2 being not present in all CPA-producing fungi but involved in additional modifications that occur in biosynthesis the of a range of CPA and CPA-like products. Further studies are required to clarify whether the CPA-like hps1-dma1 cluster is functional or a non-functional relic reflecting evolution of D.septosporum. In Dothistroma septosporum (strain NZE10 / CBS 128990) (Red band needle blight fungus), this protein is Hps1-dma1 cluster O-methyltransferase.